Here is a 528-residue protein sequence, read N- to C-terminus: Zinc finger protein 16-like (528 aa).

The interval 1-28 (MSRKRNHCYMETGASSESQGAFVDSAGP) is disordered. Positions 79–106 (IRVLKMELREKSDEIELLKAKLESAEKD) form a coiled coil. Disordered stretches follow at residues 159–202 (GAAE…TDAE) and 232–293 (FKGD…DRME). Positions 232 to 242 (FKGDSETKCED) are enriched in basic and acidic residues. A compositionally biased stretch (acidic residues) spans 244–256 (PPMDEEDENEDSE). Basic and acidic residues-rich tracts occupy residues 257–270 (EGRG…DHFP) and 278–293 (GEDR…DRME). The C2H2-type 1 zinc-finger motif lies at 303–326 (FICPFCGTLCPDSSFLEEHIKLMH). The segment covering 333–345 (QSTSAGSSSQAEG) has biased composition (low complexity). The disordered stretch occupies residues 333 to 359 (QSTSAGSSSQAEGDSGEAGPASRGARE). 4 C2H2-type zinc fingers span residues 366-388 (YECG…QRIH), 394-416 (FVCP…RLSH), 423-445 (FPCP…QRVH), and 451-473 (YACP…MRIH). The C2H2-type 6; degenerate zinc finger occupies 479-501 (YTCYQCGRSFRHLGTYKSHRCMP). The disordered stretch occupies residues 502–528 (ATQMPSEHSPPWAQEDKVQTGRLQGYV).

This sequence belongs to the krueppel C2H2-type zinc-finger protein family.

The protein resides in the nucleus. In terms of biological role, probable transcription factor. Important for development and migration of oligodendrocyte precursor cells, and normal myelination of axons in the central nervous system (CNS). Functions autonomously in oligodendrocytes to promote CNS myelination. Seems to act in parallel with notch3 during oligodendrocyte development. The protein is Zinc finger protein 16-like of Danio rerio (Zebrafish).